Consider the following 532-residue polypeptide: Vesicular acetylcholine transporter (532 aa).

At 1–33 the chain is on the cytoplasmic side; sequence MESAEPAGQARAAATKLSEAVGAALQEPRRQRR. The chain crosses the membrane as a helical span at residues 34–54; the sequence is LVLVIVCVALLLDNMLYMVIV. At 55–125 the chain is on the lumenal, vesicle side; sequence PIVPDYIAHM…PTESEDVKIG (71 aa). N-linked (GlcNAc...) asparagine glycosylation is found at Asn-89 and Asn-96. The helical transmembrane segment at 126–146 threads the bilayer; the sequence is VLFASKAILQLLVNPLSGPFI. At 147–152 the chain is on the cytoplasmic side; it reads DRMSYD. The helical transmembrane segment at 153-173 threads the bilayer; that stretch reads VPLLIGLGVMFASTVLFAFAE. Over 174–182 the chain is Lumenal, vesicle; it reads DYATLFAAR. The chain crosses the membrane as a helical span at residues 183–203; it reads SLQGLGSAFADTSGIAMIADK. Over 204 to 213 the chain is Cytoplasmic; sequence YPEEPERSRA. A helical transmembrane segment spans residues 214–234; sequence LGVALAFISFGSLVAPPFGGI. The Lumenal, vesicle segment spans residues 235 to 242; that stretch reads LYEFAGKR. The chain crosses the membrane as a helical span at residues 243–263; the sequence is VPFLVLAAVSLFDALLLLAVA. Over 264 to 289 the chain is Cytoplasmic; sequence KPFSAAARARANLPVGTPIHRLMLDP. Residues 290-310 form a helical membrane-spanning segment; it reads YIAVVAGALTTCNIPLAFLEP. Residues 311 to 325 are Lumenal, vesicle-facing; that stretch reads TIATWMKHTMAASEW. A helical transmembrane segment spans residues 326-346; that stretch reads EMGMAWLPAFVPHVLGVYLTV. The Cytoplasmic portion of the chain corresponds to 347 to 356; sequence RLAARYPHLQ. A helical transmembrane segment spans residues 357-377; it reads WLYGALGLAVIGASSCIVPAC. Topologically, residues 378–388 are lumenal, vesicle; sequence RSFAPLVVSLC. Residues 389-409 traverse the membrane as a helical segment; that stretch reads GLCFGIALVDTALLPTLAFLV. Topologically, residues 410 to 422 are cytoplasmic; it reads DVRHVSVYGSVYA. A helical transmembrane segment spans residues 423-443; it reads IADISYSVAYALGPIVAGHIV. Topologically, residues 444 to 447 are lumenal, vesicle; sequence HSLG. A helical transmembrane segment spans residues 448-468; that stretch reads FEQLSLGMGLANLLYAPVLLL. Topologically, residues 469 to 532 are cytoplasmic; the sequence is LRNVGLLTRS…DDYNYYYTRS (64 aa). The mediates interaction with SEC14L1 stretch occupies residues 471-532; it reads NVGLLTRSRS…DDYNYYYTRS (62 aa). The segment at 502–523 is disordered; sequence RPVSGQDGEPRSPPGPFDACED.

Belongs to the major facilitator superfamily. Vesicular transporter family. Interacts with SEC14L1. Peripheral and central cholinergic nervous systems.

It is found in the cytoplasmic vesicle. The protein resides in the secretory vesicle. Its subcellular location is the synaptic vesicle membrane. The enzyme catalyses acetylcholine(out) + 2 H(+)(in) = acetylcholine(in) + 2 H(+)(out). It catalyses the reaction choline(in) + 2 H(+)(out) = choline(out) + 2 H(+)(in). It carries out the reaction serotonin(in) + 2 H(+)(out) = serotonin(out) + 2 H(+)(in). Its activity is regulated as follows. Potently inhibited by L-vesamicol, reserpine and tetrabenazine. Functionally, electrogenic antiporter that exchanges one cholinergic neurotransmitter, acetylcholine or choline, with two intravesicular protons across the membrane of synaptic vesicles. Uses the electrochemical proton gradient established by the V-type proton-pump ATPase to store neurotransmitters inside the vesicles prior to their release via exocytosis. Determines cholinergic vesicular quantal size at presynaptic nerve terminals in developing neuro-muscular junctions with an impact on motor neuron differentiation and innervation pattern. Part of forebrain cholinergic system, regulates hippocampal synapse transmissions that underlie spatial memory formation. Can transport serotonin. The polypeptide is Vesicular acetylcholine transporter (SLC18A3) (Homo sapiens (Human)).